The primary structure comprises 254 residues: Wall-associated protein (254 aa).

Residues 25-46 (DRVEPKEEPPKVPQAPKRDLKP) form a disordered region.

It is found in the secreted. The protein resides in the cell wall. The sequence is that of Wall-associated protein (wapA') from Geobacillus stearothermophilus (Bacillus stearothermophilus).